A 296-amino-acid polypeptide reads, in one-letter code: Fructose-bisphosphate aldolase class 1 (296 aa).

The active-site Proton acceptor is Glu-175. Residue Lys-212 is the Schiff-base intermediate with dihydroxyacetone-P of the active site.

Belongs to the class I fructose-bisphosphate aldolase family.

It carries out the reaction beta-D-fructose 1,6-bisphosphate = D-glyceraldehyde 3-phosphate + dihydroxyacetone phosphate. The protein operates within carbohydrate degradation; glycolysis; D-glyceraldehyde 3-phosphate and glycerone phosphate from D-glucose: step 4/4. The polypeptide is Fructose-bisphosphate aldolase class 1 (Staphylococcus haemolyticus (strain JCSC1435)).